Reading from the N-terminus, the 205-residue chain is MTKRNEAKYKIDRRMGQNIWGRPKSPVNKREYGPGQHGQRRKGKLSDFGTQLRAKQKLKGYYANISERQFYAIYVEATRLKGDSGENLIGLLERRLDTVVYRAKFVPTMFAARQFINHGHVKVNGRRVNIPSYKLKVGDAIEVKDASKQLALVLEANQLAERDVPDFIDADHNKQTAKFVRIPHLADVPFAVQMEPHLIVEFYSR.

The segment at 18–49 (NIWGRPKSPVNKREYGPGQHGQRRKGKLSDFG) is disordered. Residues 94–157 (RRLDTVVYRA…KQLALVLEAN (64 aa)) form the S4 RNA-binding domain.

This sequence belongs to the universal ribosomal protein uS4 family. Part of the 30S ribosomal subunit. Contacts protein S5. The interaction surface between S4 and S5 is involved in control of translational fidelity.

Its function is as follows. One of the primary rRNA binding proteins, it binds directly to 16S rRNA where it nucleates assembly of the body of the 30S subunit. With S5 and S12 plays an important role in translational accuracy. The polypeptide is Small ribosomal subunit protein uS4 (Nitrobacter hamburgensis (strain DSM 10229 / NCIMB 13809 / X14)).